Reading from the N-terminus, the 337-residue chain is Thymidylate synthase (337 aa).

Residues Arg-74 and Arg-199–Arg-200 contribute to the dUMP site. Cys-219 functions as the Nucleophile in the catalytic mechanism. DUMP contacts are provided by residues Arg-239–Asp-242, Asn-250, and His-280–Tyr-282. Asp-242 provides a ligand contact to (6R)-5,10-methylene-5,6,7,8-tetrahydrofolate. (6R)-5,10-methylene-5,6,7,8-tetrahydrofolate is bound at residue Ala-336.

It belongs to the thymidylate synthase family. Homodimer.

It catalyses the reaction dUMP + (6R)-5,10-methylene-5,6,7,8-tetrahydrofolate = 7,8-dihydrofolate + dTMP. It participates in pyrimidine metabolism; dTTP biosynthesis. This chain is Thymidylate synthase (70), found in Homo sapiens (Human).